We begin with the raw amino-acid sequence, 231 residues long: uncharacterized protein (231 aa).

6 helical membrane-spanning segments follow: residues 4 to 24 (YIIYLYTFLTIFGFWLALQIS), 29 to 49 (SMIFNTFVLTVLILAAILVIG), 58 to 78 (AGNAPINNLLGLSIVALALPL), 95 to 115 (TVVIASFLAMLSGGLLALLLG), 147 to 167 (VTAVGVVVAGLQGSIFGYLVL), and 211 to 231 (LCGIISSILAPFVFKLIYFFV).

It belongs to the YohK (E.coli)/YwbG (IPA-22R) (B.subtilis) family.

The protein resides in the cell membrane. This is an uncharacterized protein from Haemophilus influenzae (strain ATCC 51907 / DSM 11121 / KW20 / Rd).